Here is a 227-residue protein sequence, read N- to C-terminus: MTKRAIVLLSGGLDSATVLAMANAAGFETYALSMRYGQRHSSELEAAKRVAAELGAKRHEIIDLDLRRFGGSALTDDALDVPTDGAAGGIPITYVPARNTIMLSLALGWAEAIGGRDLFFGANAVDYSGYPDCRPEYVAAYETLANLATKAGVEGDRFHVHAPIIDMTKAEIILAGVKLGVDYGLTVSCYKADDDGRACGVCDSCRIRRAGFEAAGVPDPTRYQTPN.

9–19 (LSGGLDSATVL) contacts ATP. Zn(2+)-binding residues include C189, C199, C202, and C205.

This sequence belongs to the QueC family. It depends on Zn(2+) as a cofactor.

It catalyses the reaction 7-carboxy-7-deazaguanine + NH4(+) + ATP = 7-cyano-7-deazaguanine + ADP + phosphate + H2O + H(+). It participates in purine metabolism; 7-cyano-7-deazaguanine biosynthesis. In terms of biological role, catalyzes the ATP-dependent conversion of 7-carboxy-7-deazaguanine (CDG) to 7-cyano-7-deazaguanine (preQ(0)). The protein is 7-cyano-7-deazaguanine synthase of Cupriavidus metallidurans (strain ATCC 43123 / DSM 2839 / NBRC 102507 / CH34) (Ralstonia metallidurans).